The chain runs to 441 residues: ATP-dependent protease ATPase subunit HslU (441 aa).

ATP-binding positions include Val18, 60-65, Asp253, Glu319, and Arg391; that span reads GVGKTE.

Belongs to the ClpX chaperone family. HslU subfamily. In terms of assembly, a double ring-shaped homohexamer of HslV is capped on each side by a ring-shaped HslU homohexamer. The assembly of the HslU/HslV complex is dependent on binding of ATP.

The protein localises to the cytoplasm. Its function is as follows. ATPase subunit of a proteasome-like degradation complex; this subunit has chaperone activity. The binding of ATP and its subsequent hydrolysis by HslU are essential for unfolding of protein substrates subsequently hydrolyzed by HslV. HslU recognizes the N-terminal part of its protein substrates and unfolds these before they are guided to HslV for hydrolysis. The protein is ATP-dependent protease ATPase subunit HslU of Nitratidesulfovibrio vulgaris (strain DP4) (Desulfovibrio vulgaris).